The following is a 504-amino-acid chain: Maturase K (504 aa).

It belongs to the intron maturase 2 family. MatK subfamily.

It is found in the plastid. It localises to the chloroplast. Functionally, usually encoded in the trnK tRNA gene intron. Probably assists in splicing its own and other chloroplast group II introns. This Thlaspi arvense (Field penny-cress) protein is Maturase K.